The following is a 150-amino-acid chain: Ankyrin repeat protein C18/B24 (150 aa).

An ANK repeat occupies 41-73 (ENKTLLYYAVDVNNIQFAKRLLEYGASVTTSRS).

The protein is Ankyrin repeat protein C18/B24 of Vaccinia virus (strain Copenhagen) (VACV).